Reading from the N-terminus, the 215-residue chain is Cytochrome b6 (215 aa).

Residues 32 to 52 (IFYCLGGITLTCFLVQVATGF) form a helical membrane-spanning segment. Position 35 (cysteine 35) interacts with heme c. Residues histidine 86 and histidine 100 each coordinate heme b. The next 3 membrane-spanning stretches (helical) occupy residues 90–110 (ASMM…TGGF), 116–136 (LTWV…VTGY), and 186–206 (LHTF…FLMI). Heme b-binding residues include histidine 187 and histidine 202.

Belongs to the cytochrome b family. PetB subfamily. In terms of assembly, the 4 large subunits of the cytochrome b6-f complex are cytochrome b6, subunit IV (17 kDa polypeptide, PetD), cytochrome f and the Rieske protein, while the 4 small subunits are PetG, PetL, PetM and PetN. The complex functions as a dimer. Heme b is required as a cofactor. The cofactor is heme c.

The protein resides in the plastid. The protein localises to the chloroplast thylakoid membrane. Its function is as follows. Component of the cytochrome b6-f complex, which mediates electron transfer between photosystem II (PSII) and photosystem I (PSI), cyclic electron flow around PSI, and state transitions. The sequence is that of Cytochrome b6 from Hordeum vulgare (Barley).